Here is a 247-residue protein sequence, read N- to C-terminus: Protein-L-isoaspartate O-methyltransferase 2 (247 aa).

The active site involves serine 97.

This sequence belongs to the methyltransferase superfamily. L-isoaspartyl/D-aspartyl protein methyltransferase family.

It localises to the cytoplasm. The enzyme catalyses [protein]-L-isoaspartate + S-adenosyl-L-methionine = [protein]-L-isoaspartate alpha-methyl ester + S-adenosyl-L-homocysteine. Its function is as follows. Catalyzes the methyl esterification of L-isoaspartyl residues in peptides and proteins that result from spontaneous decomposition of normal L-aspartyl and L-asparaginyl residues. It plays a role in the repair and/or degradation of damaged proteins. In Syntrophobacter fumaroxidans (strain DSM 10017 / MPOB), this protein is Protein-L-isoaspartate O-methyltransferase 2.